The chain runs to 910 residues: Dimethylsulfide dehydrogenase subunit alpha (910 aa).

The segment at residues 1–28 is a signal peptide (tat-type signal); it reads MLRTTRRTLMQGASLVGAGLFAAGRGWA. The 65-residue stretch at 59–123 folds into the 4Fe-4S Mo/W bis-MGD-type domain; that stretch reads DYVGKAAHCI…IHSTSMYEAD (65 aa). Histidine 66, cysteine 70, cysteine 74, and cysteine 109 together coordinate [4Fe-4S] cluster.

It belongs to the prokaryotic molybdopterin-containing oxidoreductase family. Heterotrimer of alpha, beta and gamma subunits. Requires [4Fe-4S] cluster as cofactor. Mo-bis(molybdopterin guanine dinucleotide) is required as a cofactor. Predicted to be exported by the Tat system. The position of the signal peptide cleavage has been experimentally proven.

The protein resides in the periplasm. The enzyme catalyses 2 Fe(III)-[cytochrome c2] + dimethyl sulfide + H2O = 2 Fe(II)-[cytochrome c2] + dimethyl sulfoxide + 2 H(+). Its function is as follows. Allows photoautotrophic growth on dimethyl sulfide (DMS) as the sole electron donor. This chain is Dimethylsulfide dehydrogenase subunit alpha (ddhA), found in Rhodovulum sulfidophilum (Rhodobacter sulfidophilus).